Consider the following 5641-residue polypeptide: Cyclochlorotine synthetase (5641 aa).

Residues 95-124 are disordered; it reads PENLNGHLIGSTNGHKKQWENDSADDKRGQ. Residues 111 to 124 show a composition bias toward basic and acidic residues; the sequence is KQWENDSADDKRGQ. Positions 217–622 are adenylation (A) domain 1; that stretch reads FTENVQRYPT…GRRDTQVKIR (406 aa). The 77-residue stretch at 816 to 892 folds into the Carrier 1 domain; the sequence is TEEEYKIQTL…DLVSNCKMSA (77 aa). The thiolation (T) domain 1 stretch occupies residues 821–889; it reads KIQTLKEIWS…QLSDLVSNCK (69 aa). Ser853 carries the O-(pantetheine 4'-phosphoryl)serine modification. Positions 926-1333 are condensation (C) domain 1; sequence EDVYPCTPLQ…AHVAEQIGQP (408 aa). Positions 1390-1768 are adenylation (A) domain 2; the sequence is DGNLTFEELN…ISRATTQIKI (379 aa). Residues 1902 to 1978 form the Carrier 2 domain; the sequence is IELSEKQENM…QLVMIATELT (77 aa). A thiolation (T) domain 2 region spans residues 1907–1975; that stretch reads KQENMARLWA…RFDQLVMIAT (69 aa). Position 1939 is an O-(pantetheine 4'-phosphoryl)serine (Ser1939). The tract at residues 2022–2438 is condensation (C) domain 2; the sequence is DIYACTPFQE…DLASEQDLAK (417 aa). The interval 2459–2859 is adenylation (A) domain 3; sequence AEKARQHPNK…GRADTQVKLR (401 aa). The Carrier 3 domain maps to 2976–3052; sequence GPLTEMETTL…GMAIKIQPIH (77 aa). Positions 2977–3049 are thiolation (T) domain 3; it reads PLTEMETTLA…NLAGMAIKIQ (73 aa). Ser3013 is subject to O-(pantetheine 4'-phosphoryl)serine. The interval 3089–3482 is condensation (C) domain 3; that stretch reads DIYPCTPLQV…LETVLSAFST (394 aa). The tract at residues 3523-3873 is adenylation (A) domain 4; it reads VQRAPDKVAI…IARKDLQVKL (351 aa). Residues 4005-4081 form the Carrier 4 domain; sequence IPSTPTEMKM…ELATKIAPRI (77 aa). Positions 4010–4078 are thiolation (T) domain 4; it reads TEMKMQQLWA…RLSELATKIA (69 aa). Ser4042 is modified (O-(pantetheine 4'-phosphoryl)serine). Positions 4123 to 4549 are condensation (C) domain 4; the sequence is KDVYPCTPLQ…QSLDSLSQQD (427 aa). The interval 4574–4982 is adenylation (A) domain 5; the sequence is QEIAGRHPDA…GRIGTDIKLR (409 aa). Positions 5118–5194 constitute a Carrier 5 domain; sequence PPSTQEEKVI…SLAEKISWES (77 aa). Positions 5123–5191 are thiolation (T) domain 5; sequence EEKVIAALWA…KLASLAEKIS (69 aa). Ser5155 is subject to O-(pantetheine 4'-phosphoryl)serine. Residues 5260–5556 are condensation (C) domain 5; it reads AYLDIGPDVQ…DKCTTCVSGS (297 aa).

The protein belongs to the NRP synthetase family.

The protein operates within mycotoxin biosynthesis. In terms of biological role, nonribosomal peptide synthetase; part of the gene cluster that mediates the biosynthesis of the mycotoxin cyclochlorotine, a hepatotoxic and carcinogenic cyclic chlorinated pentapeptide. Within the pathway, The NRPS cctN initially catalyzes the condensation of L-serine (Ser), Pro, L-2-aminobutyrate (2Abu), Ser, and beta-Phe in this order. During the chain elongation, side-chain hydroxy group of Ser4 would be used as a nucleophile, giving isocyclotine as a product of terminal condensation-like (CT) domain-catalyzed cyclization. After the dichlorination of Pro2 catalyzed by cctP2 to produce isocyclochlorotine, the cctO-mediated transacylation of isocyclochlorotine can furnish cyclochlorotine. The subsequent hydroxylation of cyclochlorotine by cctR yields hydroxycyclochlorotine as the final product. CctP1 probably acts as a phenylalanine aminomutase and provides the uncommon building block beta-Phe. Furthermore, 2Abu can be synthesized from threonine by one of the threonine dehydratases and transaminases localized outside of the cluster. The functions of the remaining proteins encoded by the cluster, cctM and cctT, have not been identified yet. This chain is Cyclochlorotine synthetase, found in Talaromyces islandicus (Penicillium islandicum).